A 305-amino-acid polypeptide reads, in one-letter code: Homoserine O-acetyltransferase (305 aa).

C142 serves as the catalytic Acyl-thioester intermediate. Residues K163 and S192 each contribute to the substrate site. H235 acts as the Proton acceptor in catalysis. E237 is an active-site residue. Residue R249 participates in substrate binding.

It belongs to the MetA family.

It is found in the cytoplasm. It carries out the reaction L-homoserine + acetyl-CoA = O-acetyl-L-homoserine + CoA. It participates in amino-acid biosynthesis; L-methionine biosynthesis via de novo pathway; O-acetyl-L-homoserine from L-homoserine: step 1/1. In terms of biological role, transfers an acetyl group from acetyl-CoA to L-homoserine, forming acetyl-L-homoserine. The sequence is that of Homoserine O-acetyltransferase from Bacteroides fragilis (strain ATCC 25285 / DSM 2151 / CCUG 4856 / JCM 11019 / LMG 10263 / NCTC 9343 / Onslow / VPI 2553 / EN-2).